Consider the following 426-residue polypeptide: MTSSHRLLLENAQQVVLVCARGERFLTGSALRSLAVLEGASVVVGTDGLIKAVGPAAVIQKQFSGETFEERIDCSGKCVLPGLVDAHTHPVWAGERVHEFAMKLAGATYMDIHQAGGGINFTVEHTRQASEEELFCSFQQRLQCMMRAGTTLVECKSGYGLNLETELKMLRVIERARRELHLSLSATYCGAHSVPKGKTAVEAADDIISHHLPRLKELSRNGDLHVDNIDVFCEKGVFDLDTTRRILEGGKKMGLQINFHGDELHPMKAAELGAELGAQAISHLEEVSDEGIAAMAAARCSAVLLPTTAYMLRLKQPRARKMLDEGVIVALGSDFNPNAYCFSMPMVMHLACVNMRMSMPEALAAATINAAYALGKSHTHGSLEVGKQGDAIIINASRWEHLIYQFGGHHELIDYVITKGKVIYKK.

Tyr159 and His192 together coordinate 4-imidazolone-5-propanoate. Tyr159 contacts N-formimidoyl-L-glutamate. His260 serves as a coordination point for Fe(3+). His260 serves as a coordination point for Zn(2+). Glu263 is a binding site for 4-imidazolone-5-propanoate. A Fe(3+)-binding site is contributed by Asp334. Position 334 (Asp334) interacts with Zn(2+). Asn336 is an N-formimidoyl-L-glutamate binding site.

This sequence belongs to the metallo-dependent hydrolases superfamily. HutI family. The cofactor is Zn(2+). Fe(3+) serves as cofactor.

It carries out the reaction 4-imidazolone-5-propanoate + H2O = N-formimidoyl-L-glutamate. It participates in amino-acid degradation; L-histidine degradation into L-glutamate; N-formimidoyl-L-glutamate from L-histidine: step 3/3. The chain is Probable imidazolonepropionase (Amdhd1) from Mus musculus (Mouse).